Reading from the N-terminus, the 806-residue chain is G-type lectin S-receptor-like serine/threonine-protein kinase At1g61430 (806 aa).

Residues 1 to 24 form the signal peptide; the sequence is MGKKRIVFFAYLPFFTIFMSFSFA. A Bulb-type lectin domain is found at 25–144; it reads GITKESPFSI…VSGRTLWQSF (120 aa). Residues 25 to 425 are Extracellular-facing; it reads GITKESPFSI…ELDVNKRKMT (401 aa). N-linked (GlcNAc...) asparagine glycans are attached at residues Asn-53, Asn-94, Asn-117, and Asn-236. The EGF-like domain maps to 277-313; that stretch reads PANSCDIYGVCGPFGLCVVSIPPKCKCFKGFVPKFAK. 2 disulfides stabilise this stretch: Cys-281/Cys-293 and Cys-287/Cys-301. 3 N-linked (GlcNAc...) asparagine glycosylation sites follow: Asn-319, Asn-335, and Asn-374. Positions 332 to 414 constitute a PAN domain; sequence CQGNSSGKDA…GELLSIRLAR (83 aa). 2 cysteine pairs are disulfide-bonded: Cys-367–Cys-388 and Cys-371–Cys-377. Residues 426 to 446 traverse the membrane as a helical segment; that stretch reads IVASTVSLTLFVIFGFAAFGF. Residues 447 to 806 are Cytoplasmic-facing; it reads WRCRVEHNAH…EMTESVIQGR (360 aa). The 289-residue stretch at 489–777 folds into the Protein kinase domain; the sequence is FSLSNKLGPG…DLPLPKKPTF (289 aa). ATP contacts are provided by residues 495–503 and Lys-520; that span reads LGPGGFGSV. 2 positions are modified to phosphoserine: Ser-526 and Ser-541. The segment at 581–598 is caM-binding; it reads RKKLELDWPKRFEIIEGI. The active-site Proton acceptor is the Asp-617. 2 positions are modified to phosphoserine: Ser-621 and Ser-634. Thr-651 is modified (phosphothreonine). A phosphoserine mark is found at Ser-694, Ser-695, and Ser-788.

It belongs to the protein kinase superfamily. Ser/Thr protein kinase family.

It is found in the cell membrane. It carries out the reaction L-seryl-[protein] + ATP = O-phospho-L-seryl-[protein] + ADP + H(+). The enzyme catalyses L-threonyl-[protein] + ATP = O-phospho-L-threonyl-[protein] + ADP + H(+). The polypeptide is G-type lectin S-receptor-like serine/threonine-protein kinase At1g61430 (Arabidopsis thaliana (Mouse-ear cress)).